Reading from the N-terminus, the 461-residue chain is ERBB receptor feedback inhibitor 1 (461 aa).

S2 carries the N-acetylserine modification. Phosphothreonine is present on residues T126 and T130. A disordered region spans residues 228–353; sequence QNRVVPDPNP…VMPPTQSFAP (126 aa). Phosphoserine is present on residues S251 and S272. The segment covering 265-274 has biased composition (polar residues); sequence SSCTHRASPS. Pro residues predominate over residues 283–292; sequence PPRVPIPPRP. S301 carries the post-translational modification Phosphoserine. Basic and acidic residues predominate over residues 311 to 324; sequence DEDRPPKVPPREPL. Positions 325–336 are enriched in polar residues; that stretch reads SRSNSRTPSPKS. The tract at residues 333–362 is interaction with EGFR and ERBB2 and regulation of EGFR activation; the sequence is SPKSLPSYLNGVMPPTQSFAPDPKYVSSKA. At S460 the chain carries Phosphoserine.

Belongs to the MIG6 family. Interacts with EGFR. Interacts with ERBB2. In terms of tissue distribution, detected in lung, in airway epithelial cells and alveolar type 2 cells (at protein level). Detected in uterus stroma, luminal epithelium and glandular epithelium.

It localises to the cytoplasm. The protein localises to the cell membrane. The protein resides in the nucleus. Its function is as follows. Negative regulator of EGFR signaling in skin morphogenesis. Acts as a negative regulator for several EGFR family members, including ERBB2, ERBB3 and ERBB4. Inhibits EGFR catalytic activity by interfering with its dimerization. Inhibits autophosphorylation of EGFR, ERBB2 and ERBB4. Important for normal keratinocyte proliferation and differentiation. Plays a role in modulating the response to steroid hormones in the uterus. Required for normal response to progesterone in the uterus and for fertility. Mediates epithelial estrogen responses in the uterus by regulating ESR1 levels and activation. Important for regulation of endometrium cell proliferation. Important for normal prenatal and perinatal lung development. The protein is ERBB receptor feedback inhibitor 1 (Errfi1) of Mus musculus (Mouse).